A 219-amino-acid chain; its full sequence is Leukocyte surface antigen CD53 (219 aa).

The Cytoplasmic portion of the chain corresponds to 1-11 (MGMSSLKLLKY). A helical transmembrane segment spans residues 12-32 (VLFFFNLLFWICGCCILGFGI). Over 33 to 54 (YLLIHNNFGVLFHNLPSLTLGN) the chain is Extracellular. The helical transmembrane segment at 55 to 69 (VFVIVGSIIMVVAFL) threads the bilayer. Over 70-80 (GCMGSIKENKC) the chain is Cytoplasmic. The chain crosses the membrane as a helical span at residues 81–106 (LLMSFFILLLIILLAEVTLAILLFVY). Residues 107–181 (EQKLNEYVAK…AKARLWFHSN (75 aa)) lie on the Extracellular side of the membrane. 2 N-linked (GlcNAc...) asparagine glycosylation sites follow: Asn129 and Asn148. A helical transmembrane segment spans residues 182 to 206 (FLYIGIITICVCVIEVLGMSFALTL). Residues 207–219 (NCQIDKTSQTIGL) lie on the Cytoplasmic side of the membrane.

The protein belongs to the tetraspanin (TM4SF) family. Interacts with SCIMP. Interacts with CD45/PTPRC. Interacts with IL7R. Interacts with RBL2 and PPP2CA. In terms of tissue distribution, B-cells, monocytes, macrophages, neutrophils, single (CD4 or CD8) positive thymocytes and peripheral T-cells.

The protein resides in the cell membrane. It localises to the cell junction. Its subcellular location is the membrane. It is found in the synapse. Its function is as follows. Structural component of specialized membrane microdomains known as tetraspanin-enriched microdomains (TERMs), which act as platforms for receptor clustering and signaling. Participates thereby in diverse biological functions such as cell signal transduction, adhesion, migration and protein trafficking. Plays a role in the activation of monocytes and B-cells. Acts as an essential regulator of B-cell development by promoting interleukin-7 receptor/IL7R signaling. Also promotes, in B-cells, the BCR signaling by recruiting PKC to the plasma membrane in order to phosphorylate its substrates. Plays an essential role in B- and T-cells homing to lymph nodes by stabilizing L-selectin/SELL cell surface expression. Also mediates metabolic and inflammatory functions in hepatocytes and adipose tissue by promoting TNF-alpha and LPS signaling independent of the immune compartment. This is Leukocyte surface antigen CD53 (CD53) from Homo sapiens (Human).